Reading from the N-terminus, the 1267-residue chain is Ankyrin repeat and ELMO domain-containing protein D (1267 aa).

One can recognise an ELMO domain in the interval 307 to 466 (SHQRLLETLW…FVSGLASEVL (160 aa)). A compositionally biased stretch (basic and acidic residues) spans 486–496 (KKKEKKSEKRG). Positions 486-598 (KKKEKKSEKR…NNHILNNNHL (113 aa)) are disordered. The span at 507 to 598 (GSNGNINSTT…NNHILNNNHL (92 aa)) shows a compositional bias: low complexity. 4 ANK repeats span residues 655-685 (DGNS…FLNT), 689-718 (QGLT…DPFI), 767-796 (TLET…NINN), and 801-830 (SGQN…DPSI). Disordered stretches follow at residues 854–908 (NPTK…NSTS), 924–1040 (TSIN…SPIF), 1057–1082 (SPTQ…NGAE), and 1103–1215 (ENLT…PPKD). Composition is skewed to low complexity over residues 859-870 (SRSTSSTSSSTS), 895-908 (ITNN…NSTS), and 924-1033 (TSIN…STSP). Polar residues predominate over residues 1057–1080 (SPTQESPQVISTPTSPPYLSNNNG). Low complexity-rich tracts occupy residues 1108–1176 (NSGN…IGSH) and 1184–1213 (HNGP…VTPP).

This chain is Ankyrin repeat and ELMO domain-containing protein D (elmoD), found in Dictyostelium discoideum (Social amoeba).